A 183-amino-acid polypeptide reads, in one-letter code: Peptidyl-tRNA hydrolase (183 aa).

Tyrosine 14 provides a ligand contact to tRNA. Catalysis depends on histidine 19, which acts as the Proton acceptor. TRNA-binding residues include phenylalanine 64 and asparagine 66.

It belongs to the PTH family. Monomer.

The protein resides in the cytoplasm. It catalyses the reaction an N-acyl-L-alpha-aminoacyl-tRNA + H2O = an N-acyl-L-amino acid + a tRNA + H(+). Its function is as follows. Hydrolyzes ribosome-free peptidyl-tRNAs (with 1 or more amino acids incorporated), which drop off the ribosome during protein synthesis, or as a result of ribosome stalling. Catalyzes the release of premature peptidyl moieties from peptidyl-tRNA molecules trapped in stalled 50S ribosomal subunits, and thus maintains levels of free tRNAs and 50S ribosomes. The polypeptide is Peptidyl-tRNA hydrolase (Syntrophomonas wolfei subsp. wolfei (strain DSM 2245B / Goettingen)).